The chain runs to 760 residues: Complement C2 (760 aa).

An N-terminal signal peptide occupies residues 1 to 18 (MAPLLALFYLLQLGPGLA). 3 Sushi domains span residues 20-90 (LFCN…AVCK), 92-151 (VRCL…VCDN), and 154-212 (SHCP…ICRQ). Intrachain disulfides connect Cys-22-Cys-62, Cys-49-Cys-89, Cys-94-Cys-136, Cys-122-Cys-149, Cys-156-Cys-197, and Cys-182-Cys-210. Asn-27 and Asn-32 each carry an N-linked (GlcNAc...) asparagine glycan. Asn-117 carries N-linked (GlcNAc...) asparagine glycosylation. Residues 261-459 (NLYLLLDASQ…KALQQIFEHM (199 aa)) form the VWFA domain. An MIDAS-like motif motif is present at residues 267–271 (DASQS). Residues Ser-269 and Ser-271 each coordinate Mg(2+). N-linked (GlcNAc...) asparagine glycans are attached at residues Asn-297 and Asn-340. Thr-344 contributes to the Mg(2+) binding site. Intrachain disulfides connect Cys-470/Cys-590, Cys-499/Cys-515, Cys-593/Cys-609, Cys-647/Cys-674, and Cys-685/Cys-715. The Peptidase S1 domain occupies 471–752 (GVGNMSANAS…LQPWLRQHLD (282 aa)). Residues Asn-474 and Asn-478 are each glycosylated (N-linked (GlcNAc...) asparagine). Catalysis depends on charge relay system residues His-514 and Asp-570. N-linked (GlcNAc...) asparagine glycosylation occurs at Asn-663. Ser-689 acts as the Charge relay system in catalysis.

Belongs to the peptidase S1 family. Serine protease component of the C3 convertase, also named C4bC2b, composed of the serine protease complement C2b and complement C4b. Serine protease component of the C5 convertase, also named C4bC2bC3b, composed of the serine protease complement C2b, complement C3b, as well as complement C4b. Mg(2+) is required as a cofactor. The cofactor is Mn(2+). Cleaved and activated by different proteases depending on the complement pathway to generate complement C2a and serine protease complement C2b chains. Cleaved and activated by C1S following activation by the classical complement system. Cleaved and activated by MASP2 following activation by the lectin complement system. Cleaved and activated by GZMK following activation by the GZMK complement system.

Its subcellular location is the secreted. It localises to the cell surface. It carries out the reaction Selective cleavage of Arg-|-Ser bond in complement component C3 alpha-chain to form C3a and C3b, and Arg-|-Xaa bond in complement component C5 alpha-chain to form C5a and C5b.. Its function is as follows. Precursor of the catalytic component of the C3 and C5 convertase complexes, which are part of the complement pathway, a cascade of proteins that leads to phagocytosis and breakdown of pathogens and signaling that strengthens the adaptive immune system. Component C2 is part of the classical, lectin and GZMK complement systems. In terms of biological role, catalytic component of the complement C3 and C5 convertase complexes. Following complement activation, recruited to the surface of pathogens by complement C4b opsonin to form the C3 convertase, or C3b and C4b opsonins to form the C5 convertase. As part of the C3 convertase, cleaves and activate C3 into C3a anaphylatoxin and C3b opsonin, the next components of the complement pathways. As part of the C5 convertase, cleaves and activate C5 into C5a anaphylatoxin and C5b component of the membrane attack complex. This is Complement C2 from Mus musculus (Mouse).